Here is a 383-residue protein sequence, read N- to C-terminus: Serine protease 23 (383 aa).

A signal peptide spans 1-19 (MAGIPGLLFLLFFLLCAVG). An N-linked (GlcNAc...) asparagine glycan is attached at N93. S109 carries the post-translational modification Phosphoserine; by FAM20C. C160 and C176 form a disulfide bridge. H175 serves as the catalytic Charge relay system. N207 carries an N-linked (GlcNAc...) asparagine glycan. Residues D240 and S316 each act as charge relay system in the active site.

Belongs to the peptidase S1 family.

It localises to the secreted. The sequence is that of Serine protease 23 (PRSS23) from Homo sapiens (Human).